A 133-amino-acid chain; its full sequence is Putative pre-16S rRNA nuclease (133 aa).

This sequence belongs to the YqgF nuclease family.

It is found in the cytoplasm. Functionally, could be a nuclease involved in processing of the 5'-end of pre-16S rRNA. This Bordetella pertussis (strain Tohama I / ATCC BAA-589 / NCTC 13251) protein is Putative pre-16S rRNA nuclease.